We begin with the raw amino-acid sequence, 201 residues long: Alpha-1-acid glycoprotein 1 (201 aa).

A signal peptide spans 1 to 18 (MALSWVLTVLSLLPLLEA). Gln19 is modified (pyrrolidone carboxylic acid). 2 disulfides stabilise this stretch: Cys23/Cys165 and Cys90/Cys183. Asn33 carries N-linked (GlcNAc...) (complex) asparagine glycosylation. The N-linked (GlcNAc...) asparagine glycan is linked to Asn56. Asn72 is a glycosylation site (N-linked (GlcNAc...) (complex) asparagine). 2 N-linked (GlcNAc...) asparagine glycosylation sites follow: Asn93 and Asn103.

It belongs to the calycin superfamily. Lipocalin family. N-glycosylated. N-glycan heterogeneity at Asn-33: Hex5HexNAc4 (minor), Hex6HexNAc5 (major) and dHex1Hex6HexNAc5 (minor). Expressed by the liver and secreted in plasma.

The protein localises to the secreted. Functions as a transport protein in the blood stream. Binds various ligands in the interior of its beta-barrel domain. Also binds synthetic drugs and influences their distribution and availability in the body. Appears to function in modulating the activity of the immune system during the acute-phase reaction. The protein is Alpha-1-acid glycoprotein 1 (ORM1) of Homo sapiens (Human).